Reading from the N-terminus, the 195-residue chain is MSGNNESASYASSLARLDTYYREKVVPALMERFQYKNIMEVPRLQKIAINIGVGDAAGEPKLLDVAVGELTQIAGQKPQIRKSKKAISNFKLREGQAIGCRVTLRRKAMYEFFDRFVSLAVPRIRDFRGLSDTSFDGRGNYTAGVKEQIIFPEIDIDKVPRISGMDISFVTSAKSDEEAYVLLSELGMPFKKKNN.

Belongs to the universal ribosomal protein uL5 family. As to quaternary structure, part of the 50S ribosomal subunit; part of the 5S rRNA/L5/L18/L25 subcomplex. Contacts the 5S rRNA and the P site tRNA. Forms a bridge to the 30S subunit in the 70S ribosome.

In terms of biological role, this is one of the proteins that bind and probably mediate the attachment of the 5S RNA into the large ribosomal subunit, where it forms part of the central protuberance. In the 70S ribosome it contacts protein S13 of the 30S subunit (bridge B1b), connecting the 2 subunits; this bridge is implicated in subunit movement. Contacts the P site tRNA; the 5S rRNA and some of its associated proteins might help stabilize positioning of ribosome-bound tRNAs. This Chlorobium chlorochromatii (strain CaD3) protein is Large ribosomal subunit protein uL5.